Consider the following 243-residue polypeptide: Carboxy-S-adenosyl-L-methionine synthase (243 aa).

S-adenosyl-L-methionine-binding positions include Tyr-40, 65-67, 90-91, 118-119, Asn-133, and Arg-200; these read GCS, DN, and DI.

It belongs to the class I-like SAM-binding methyltransferase superfamily. Cx-SAM synthase family. In terms of assembly, homodimer.

It carries out the reaction prephenate + S-adenosyl-L-methionine = carboxy-S-adenosyl-L-methionine + 3-phenylpyruvate + H2O. In terms of biological role, catalyzes the conversion of S-adenosyl-L-methionine (SAM) to carboxy-S-adenosyl-L-methionine (Cx-SAM). This Shewanella putrefaciens (strain CN-32 / ATCC BAA-453) protein is Carboxy-S-adenosyl-L-methionine synthase.